A 70-amino-acid polypeptide reads, in one-letter code: Flexible pilin (70 aa).

An N-terminal signal peptide occupies residues 1–24 (MPNFFRNGCIALVGSVAAMGAAHA).

In terms of assembly, homomer.

It localises to the fimbrium. Functionally, fimbriae (also called pili) are polar filaments radiating from the surface of the bacterium to a length of 0.5-1.5 micrometers and numbering 100-300 per cell. They enable bacteria to colonize the epithelium of specific host organs. Flexible pili possess hemagglutinating function. The polypeptide is Flexible pilin (aerA) (Aeromonas hydrophila).